Here is a 121-residue protein sequence, read N- to C-terminus: Large ribosomal subunit protein bL12 (121 aa).

Belongs to the bacterial ribosomal protein bL12 family. In terms of assembly, homodimer. Part of the ribosomal stalk of the 50S ribosomal subunit. Forms a multimeric L10(L12)X complex, where L10 forms an elongated spine to which 2 to 4 L12 dimers bind in a sequential fashion. Binds GTP-bound translation factors.

Forms part of the ribosomal stalk which helps the ribosome interact with GTP-bound translation factors. Is thus essential for accurate translation. This is Large ribosomal subunit protein bL12 from Shigella sonnei (strain Ss046).